Reading from the N-terminus, the 324-residue chain is Inhibitor of growth protein 1 homolog (324 aa).

Residues 120 to 237 (AEEEKKKKKS…SSRKQKSMAA (118 aa)) are disordered. The segment covering 140 to 169 (SSTTSSSSSSSSSSLSLSSSTNNTSSLNSS) has biased composition (low complexity). The span at 170 to 186 (SGGGGGGSGGGGGGGGH) shows a compositional bias: gly residues. Residues 201–229 (SLTSSSSSGNINGMSSSSSSSSSSSSLSS) show a composition bias toward low complexity. The PHD-type zinc finger occupies 271–320 (PTYCFCNRVSFGEMVGCENPDCKIEWFHFECVGLTSTPKGKWYCPDCTRI). Residues Cys274, Cys276, Cys287, Cys292, His298, Cys301, Cys314, and Cys317 each coordinate Zn(2+).

Belongs to the ING family. As to quaternary structure, interacts with H3K4me3 and to a lesser extent with H3K4me2.

The protein localises to the nucleus. Functionally, involved in regulation of the growth and differentiation transition (GDT) process, probably by regulating gene expression via histone modification. The sequence is that of Inhibitor of growth protein 1 homolog from Dictyostelium discoideum (Social amoeba).